The primary structure comprises 116 residues: Flagellar transcriptional regulator FlhD (116 aa).

Belongs to the FlhD family. Homodimer; disulfide-linked. Forms a heterohexamer composed of two FlhC and four FlhD subunits. Each FlhC binds a FlhD dimer, forming a heterotrimer, and a hexamer assembles by dimerization of two heterotrimers.

It is found in the cytoplasm. Functions in complex with FlhC as a master transcriptional regulator that regulates transcription of several flagellar and non-flagellar operons by binding to their promoter region. Activates expression of class 2 flagellar genes, including fliA, which is a flagellum-specific sigma factor that turns on the class 3 genes. Also regulates genes whose products function in a variety of physiological pathways. The polypeptide is Flagellar transcriptional regulator FlhD (Enterobacter sp. (strain 22)).